A 414-amino-acid polypeptide reads, in one-letter code: Esterase FrsA (414 aa).

Belongs to the FrsA family.

It carries out the reaction a carboxylic ester + H2O = an alcohol + a carboxylate + H(+). Its function is as follows. Catalyzes the hydrolysis of esters. This Escherichia coli O17:K52:H18 (strain UMN026 / ExPEC) protein is Esterase FrsA.